The chain runs to 364 residues: Dermonecrotic toxin SPH (364 aa).

The signal sequence occupies residues 1–17 (MIRIFALITALAITVKC). His-29 functions as the Nucleophile in the catalytic mechanism. Glu-49 and Asp-51 together coordinate Mg(2+). The active site involves His-65. 2 disulfide bridges follow: Cys-69/Cys-75 and Cys-71/Cys-215. Asp-109 provides a ligand contact to Mg(2+).

The protein belongs to the arthropod phospholipase D family. Requires Mg(2+) as cofactor. As to expression, expressed in salivary glands.

Its subcellular location is the secreted. The catalysed reaction is an N-(acyl)-sphingosylphosphocholine = an N-(acyl)-sphingosyl-1,3-cyclic phosphate + choline. It catalyses the reaction an N-(acyl)-sphingosylphosphoethanolamine = an N-(acyl)-sphingosyl-1,3-cyclic phosphate + ethanolamine. The enzyme catalyses a 1-acyl-sn-glycero-3-phosphocholine = a 1-acyl-sn-glycero-2,3-cyclic phosphate + choline. It carries out the reaction a 1-acyl-sn-glycero-3-phosphoethanolamine = a 1-acyl-sn-glycero-2,3-cyclic phosphate + ethanolamine. Its function is as follows. Dermonecrotic toxins cleave the phosphodiester linkage between the phosphate and headgroup of certain phospholipids (sphingolipid and lysolipid substrates), forming an alcohol (often choline) and a cyclic phosphate. Acts on sphingomyelin (SM). It may also act on ceramide phosphoethanolamine (CPE), lysophosphatidylcholine (LPC) and lysophosphatidylethanolamine (LPE), but not on lysophosphatidylserine (LPS), and lysophosphatidylglycerol (LPG). It acts by transphosphatidylation, releasing exclusively cyclic phosphate products as second products. Induces dermonecrosis, hemolysis, increased vascular permeability, edema, inflammatory response, and platelet aggregation. The protein is Dermonecrotic toxin SPH (SPH) of Ixodes scapularis (Black-legged tick).